Here is a 545-residue protein sequence, read N- to C-terminus: Light-independent protochlorophyllide reductase subunit N (545 aa).

[4Fe-4S] cluster contacts are provided by Cys-102, Cys-127, and Cys-187.

This sequence belongs to the BchN/ChlN family. In terms of assembly, protochlorophyllide reductase is composed of three subunits; ChlL, ChlN and ChlB. Forms a heterotetramer of two ChlB and two ChlN subunits. [4Fe-4S] cluster is required as a cofactor.

It localises to the plastid. It is found in the chloroplast. It catalyses the reaction chlorophyllide a + oxidized 2[4Fe-4S]-[ferredoxin] + 2 ADP + 2 phosphate = protochlorophyllide a + reduced 2[4Fe-4S]-[ferredoxin] + 2 ATP + 2 H2O. Its pathway is porphyrin-containing compound metabolism; chlorophyll biosynthesis (light-independent). Component of the dark-operative protochlorophyllide reductase (DPOR) that uses Mg-ATP and reduced ferredoxin to reduce ring D of protochlorophyllide (Pchlide) to form chlorophyllide a (Chlide). This reaction is light-independent. The NB-protein (ChlN-ChlB) is the catalytic component of the complex. This chain is Light-independent protochlorophyllide reductase subunit N, found in Chlamydomonas reinhardtii (Chlamydomonas smithii).